A 98-amino-acid polypeptide reads, in one-letter code: NADH-ubiquinone oxidoreductase chain 4L (98 aa).

Transmembrane regions (helical) follow at residues 1–21 (MTMV…GLLM), 29–49 (SLLC…VTIL), and 61–81 (IILL…LVMV).

This sequence belongs to the complex I subunit 4L family. As to quaternary structure, core subunit of respiratory chain NADH dehydrogenase (Complex I) which is composed of 45 different subunits.

Its subcellular location is the mitochondrion inner membrane. It carries out the reaction a ubiquinone + NADH + 5 H(+)(in) = a ubiquinol + NAD(+) + 4 H(+)(out). Functionally, core subunit of the mitochondrial membrane respiratory chain NADH dehydrogenase (Complex I) which catalyzes electron transfer from NADH through the respiratory chain, using ubiquinone as an electron acceptor. Part of the enzyme membrane arm which is embedded in the lipid bilayer and involved in proton translocation. This Neomonachus schauinslandi (Hawaiian monk seal) protein is NADH-ubiquinone oxidoreductase chain 4L (MT-ND4L).